We begin with the raw amino-acid sequence, 100 residues long: NADH-ubiquinone oxidoreductase chain 4L (100 aa).

A run of 3 helical transmembrane segments spans residues 3 to 23, 28 to 48, and 62 to 82; these read LVKY…GIFL, ILIM…NFLV, and ALFV…ILVI.

This sequence belongs to the complex I subunit 4L family. As to quaternary structure, complex I is composed of about 45 different subunits.

It localises to the mitochondrion membrane. The catalysed reaction is a ubiquinone + NADH + 5 H(+)(in) = a ubiquinol + NAD(+) + 4 H(+)(out). Its function is as follows. Core subunit of the mitochondrial membrane respiratory chain NADH dehydrogenase (Complex I) that is believed to belong to the minimal assembly required for catalysis. Complex I functions in the transfer of electrons from NADH to the respiratory chain. The immediate electron acceptor for the enzyme is believed to be ubiquinone. This Marchantia polymorpha (Common liverwort) protein is NADH-ubiquinone oxidoreductase chain 4L (ND4L).